A 123-amino-acid chain; its full sequence is SOSS complex subunit C homolog (123 aa).

This sequence belongs to the SOSS-C family.

The sequence is that of SOSS complex subunit C homolog from Drosophila ananassae (Fruit fly).